The chain runs to 692 residues: UvrABC system protein B (692 aa).

Residues 32–418 (DNIENGEKAQ…QTDTIVEQII (387 aa)) enclose the Helicase ATP-binding domain. 45–52 (GATGTGKT) is a binding site for ATP. The short motif at 98–121 (YYDYYQPEAYVPSSDTYIEKDSSV) is the Beta-hairpin element. Residues 436–631 (QIDDLVGEIH…TIKKEIRDLI (196 aa)) form the Helicase C-terminal domain. The region spanning 656 to 691 (KALVKKLEKEMQQAASALDFEGAAQLRDMVLELRAM) is the UVR domain.

Belongs to the UvrB family. As to quaternary structure, forms a heterotetramer with UvrA during the search for lesions. Interacts with UvrC in an incision complex.

It is found in the cytoplasm. In terms of biological role, the UvrABC repair system catalyzes the recognition and processing of DNA lesions. A damage recognition complex composed of 2 UvrA and 2 UvrB subunits scans DNA for abnormalities. Upon binding of the UvrA(2)B(2) complex to a putative damaged site, the DNA wraps around one UvrB monomer. DNA wrap is dependent on ATP binding by UvrB and probably causes local melting of the DNA helix, facilitating insertion of UvrB beta-hairpin between the DNA strands. Then UvrB probes one DNA strand for the presence of a lesion. If a lesion is found the UvrA subunits dissociate and the UvrB-DNA preincision complex is formed. This complex is subsequently bound by UvrC and the second UvrB is released. If no lesion is found, the DNA wraps around the other UvrB subunit that will check the other stand for damage. The protein is UvrABC system protein B of Lactococcus lactis subsp. lactis (strain IL1403) (Streptococcus lactis).